A 286-amino-acid chain; its full sequence is Energy-coupling factor transporter ATP-binding protein EcfA2 (286 aa).

An ABC transporter domain is found at 3–246 (IQFNQVSYIY…KTQLLKWHIE (244 aa)). 40 to 47 (GQTGSGKS) lines the ATP pocket.

This sequence belongs to the ABC transporter superfamily. Energy-coupling factor EcfA family. In terms of assembly, forms a stable energy-coupling factor (ECF) transporter complex composed of 2 membrane-embedded substrate-binding proteins (S component), 2 ATP-binding proteins (A component) and 2 transmembrane proteins (T component).

Its subcellular location is the cell membrane. In terms of biological role, ATP-binding (A) component of a common energy-coupling factor (ECF) ABC-transporter complex. Unlike classic ABC transporters this ECF transporter provides the energy necessary to transport a number of different substrates. The protein is Energy-coupling factor transporter ATP-binding protein EcfA2 of Staphylococcus epidermidis (strain ATCC 12228 / FDA PCI 1200).